Consider the following 99-residue polypeptide: MCTSSKSLLDLIKYPILTEKTSRLIEQNQYSFAVDRKADKISIKSAVEALFDVQVVAVNTANQPLKKRRVGKFIGKKSRVKRAVVTLAPENSITFFENA.

Belongs to the universal ribosomal protein uL23 family. Part of the 50S ribosomal subunit.

The protein resides in the plastid. Its subcellular location is the chloroplast. Its function is as follows. Binds to 23S rRNA. In Emiliania huxleyi (Coccolithophore), this protein is Large ribosomal subunit protein uL23c (rpl23).